Reading from the N-terminus, the 256-residue chain is PGL/p-HBAD biosynthesis glycosyltransferase Mb2981 (256 aa).

Belongs to the glycosyltransferase 2 family.

In terms of biological role, involved in glycosylation steps downstream of mono-O-methyl-glycosyl-p-hydroxybenzoic acid derivative (p-HBAD I) and 2-O-methyl-rhamnosyl-phenolphthiocerol dimycocerosate (mycoside B) during the p-hydroxybenzoic acid derivatives (p-HBAD) and glycosylated phenolphthiocerol dimycocerosates (PGL) biosynthesis. In Mycobacterium bovis (strain ATCC BAA-935 / AF2122/97), this protein is PGL/p-HBAD biosynthesis glycosyltransferase Mb2981.